A 478-amino-acid chain; its full sequence is TFIIA-alpha and beta-like factor (478 aa).

The interval 309–427 is disordered; sequence VKQPRNIEEP…SGDDVSEQDV (119 aa). A compositionally biased stretch (polar residues) spans 390-401; it reads SISNEDSATNSS. The segment covering 411-427 has biased composition (acidic residues); that stretch reads VEEDPLNSGDDVSEQDV.

This sequence belongs to the TFIIA subunit 1 family. In terms of tissue distribution, testis specific. Detected in adult testis mostly in round and elongating spermatids (at protein level). Detected in testis.

It localises to the nucleus. Its function is as follows. May function as a testis specific transcription factor. Binds DNA in conjunction with GTF2A2 and TBP (the TATA-binding protein) and together with GTF2A2, allows mRNA transcription. In Homo sapiens (Human), this protein is TFIIA-alpha and beta-like factor (GTF2A1L).